A 503-amino-acid polypeptide reads, in one-letter code: Cytochrome P450 6l1 (503 aa).

Cysteine 438 is a heme binding site.

It belongs to the cytochrome P450 family. Heme is required as a cofactor. As to expression, detected only in testes and accessory glands of male adults.

Its subcellular location is the endoplasmic reticulum membrane. The protein resides in the microsome membrane. The polypeptide is Cytochrome P450 6l1 (CYP6L1) (Blattella germanica (German cockroach)).